The sequence spans 234 residues: uncharacterized protein (234 aa).

Residues 65-89 (QNANRQEGRRRGLRPSSDGNLRREN) are disordered. The segment at 185-220 (CAVCLHNKVCVLFQKCKHVITCGPCSLRIKECPVCK) adopts an RING-type zinc-finger fold.

It belongs to the IIV-6 175R/332L family.

This is an uncharacterized protein from Acheta domesticus (House cricket).